The sequence spans 108 residues: uncharacterized protein (108 aa).

A lipid anchor (N-myristoyl glycine; by host) is attached at glycine 2.

This is an uncharacterized protein from Acanthamoeba polyphaga (Amoeba).